The chain runs to 573 residues: Urease subunit alpha (573 aa).

The 438-residue stretch at 136–573 folds into the Urease domain; it reads GAIDCHVHFI…LPMAQRYFLF (438 aa). Ni(2+) contacts are provided by histidine 141, histidine 143, and lysine 224. Lysine 224 carries the post-translational modification N6-carboxylysine. Histidine 226 contributes to the substrate binding site. Residues histidine 253 and histidine 279 each contribute to the Ni(2+) site. The active-site Proton donor is the histidine 327. Ni(2+) is bound at residue aspartate 367.

It belongs to the metallo-dependent hydrolases superfamily. Urease alpha subunit family. In terms of assembly, heterotrimer of UreA (gamma), UreB (beta) and UreC (alpha) subunits. Three heterotrimers associate to form the active enzyme. Requires Ni cation as cofactor. In terms of processing, carboxylation allows a single lysine to coordinate two nickel ions.

It is found in the cytoplasm. It carries out the reaction urea + 2 H2O + H(+) = hydrogencarbonate + 2 NH4(+). Its pathway is nitrogen metabolism; urea degradation; CO(2) and NH(3) from urea (urease route): step 1/1. The polypeptide is Urease subunit alpha (Nocardia farcinica (strain IFM 10152)).